The following is a 678-amino-acid chain: MGSVADDAEITGPLLAAAAGGGGDSAAAAGVERVPAWREQVTVRGIVVSAVLGVLFCLITHKLNLTVGVIPSLNVSAGLLGYFLVRSWTAVLGRLGFVIAPFTKQENTVIQTCVVACYGLAFSGGFGSYMLAMDQKTYELIGPDYPGNRAIDVMNPSLGWMIGFMFVVSFLGLFSLVALRKVMVIDYKLTYPSGTATAMLINSFHTTSGAELAEKQVSCLGKYLSISFFWNCFKWFFSGVGDSCGFDNFPSLGLAAFKNTFYFDFSPTYIGCGLICPHIVNCSTLLGAIISWGFLWPYISTKAGDWYPANLGSNDFKGLYGYKVFISVSVILGDGLYNLIKIIYATIKEVMNARSKQGRLPLVRVHDDDEGSKLSAEEKLRNDTFLKDRIPSWLAGSGYVGLAAISTATVPMIFPQVKWYLVLCAYVVAPLLAFCNSYGCGLTDWNLASTYGKIGLFIFASLVGRSGGVIAGLAACGVMMSIVSTAADLMQDFRTGYLTLSSPRSMFVSQLIGTTLGCIIAPLTFWLYWTAFDIGNPDGMFKAPYAVIYREMSILGVEGFSALPQHCLAICSVFFVAAILINLLRDVTPKSVSKFIPLPMAMAVPFYIGAYFAIDMFVGTVILFVWERVNRKESEDFAGAIASGLICGDGIWSVPSAILSIMRIDPPMCMYFKPSLTS.

A run of 14 helical transmembrane segments spans residues 41–61 (VTVR…LITH), 65–85 (LTVG…YFLV), 113–133 (CVVA…MLAM), 158–178 (LGWM…SLVA), 226–246 (ISFF…SCGF), 279–299 (IVNC…WPYI), 324–344 (VFIS…KIIY), 394–414 (LAGS…PMIF), 419–439 (WYLV…NSYG), 467–487 (GGVI…STAA), 512–532 (IGTT…WTAF), 561–581 (SALP…AILI), 606–626 (FYIG…LFVW), and 641–661 (IASG…ILSI).

Belongs to the YSL (TC 2.A.67.2) family. In terms of tissue distribution, expressed in roots and leaves.

It localises to the membrane. May be involved in the transport of nicotianamine-chelated metals. This Oryza sativa subsp. japonica (Rice) protein is Probable metal-nicotianamine transporter YSL6 (YSL6).